The primary structure comprises 539 residues: Chaperonin GroEL (539 aa).

ATP-binding positions include 30 to 33 (TLGP), Lys51, 87 to 91 (DGTTT), Gly415, 479 to 481 (NAA), and Asp495.

This sequence belongs to the chaperonin (HSP60) family. Forms a cylinder of 14 subunits composed of two heptameric rings stacked back-to-back. Interacts with the co-chaperonin GroES.

It is found in the cytoplasm. The enzyme catalyses ATP + H2O + a folded polypeptide = ADP + phosphate + an unfolded polypeptide.. In terms of biological role, together with its co-chaperonin GroES, plays an essential role in assisting protein folding. The GroEL-GroES system forms a nano-cage that allows encapsulation of the non-native substrate proteins and provides a physical environment optimized to promote and accelerate protein folding. The chain is Chaperonin GroEL from Enterobacter asburiae.